The following is a 56-amino-acid chain: uncharacterized protein (56 aa).

4Fe-4S ferredoxin-type domains follow at residues 2–28 and 29–56; these read VKID…NLIE and HIIV…LEGE. Residues Cys9, Cys12, Cys15, Cys19, Cys38, Cys41, Cys44, and Cys48 each contribute to the [4Fe-4S] cluster site.

It depends on [4Fe-4S] cluster as a cofactor.

Functionally, ferredoxins are iron-sulfur proteins that transfer electrons in a wide variety of metabolic reactions. This is an uncharacterized protein from Methanocaldococcus jannaschii (strain ATCC 43067 / DSM 2661 / JAL-1 / JCM 10045 / NBRC 100440) (Methanococcus jannaschii).